Reading from the N-terminus, the 496-residue chain is UDP-N-acetylmuramoylalanine--D-glutamate ligase (496 aa).

130-136 lines the ATP pocket; it reads GTNGKTT.

It belongs to the MurCDEF family. As to quaternary structure, interacts with PknA. Phosphorylated by PknA.

The protein localises to the cytoplasm. It carries out the reaction UDP-N-acetyl-alpha-D-muramoyl-L-alanine + D-glutamate + ATP = UDP-N-acetyl-alpha-D-muramoyl-L-alanyl-D-glutamate + ADP + phosphate + H(+). It participates in cell wall biogenesis; peptidoglycan biosynthesis. In terms of biological role, cell wall formation. Catalyzes the addition of glutamate to the nucleotide precursor UDP-N-acetylmuramoyl-L-alanine (UMA). The sequence is that of UDP-N-acetylmuramoylalanine--D-glutamate ligase from Mycobacterium tuberculosis (strain ATCC 25177 / H37Ra).